A 171-amino-acid polypeptide reads, in one-letter code: Envelope glycoprotein N (171 aa).

Over 1 to 132 (MARINSNSGT…CSALKYRIYV (132 aa)) the chain is Virion surface. Residues 133 to 153 (SSFVSVLNIILYVLLFLASVV) form a helical membrane-spanning segment. The Intravirion segment spans residues 154-171 (YIRYLCHQSITTETVKDY).

This sequence belongs to the herpesviridae glycoprotein N family. Interacts (via N-terminus) with gM (via N-terminus). The gM-gN heterodimer forms the gCII complex.

The protein resides in the virion membrane. The protein localises to the host membrane. It is found in the host Golgi apparatus. It localises to the host trans-Golgi network. In terms of biological role, envelope glycoprotein necessary for proper maturation of gM and modulation of its membrane fusion activity. Also plays a critical role in virion morphogenesis. The chain is Envelope glycoprotein N from Elephas maximus (Indian elephant).